We begin with the raw amino-acid sequence, 350 residues long: C5a anaphylatoxin chemotactic receptor 1 (350 aa).

Residues 1–36 (APMENSTYDYTNYDSLGTLDPSTPVDNTVRRLRPTT) are Extracellular-facing. N-linked (GlcNAc...) asparagine glycosylation is present at N5. A sulfotyrosine mark is found at Y10 and Y13. The helical transmembrane segment at 37 to 63 (IVALVIYMAVFLVGVPGNALVVWVTAL) threads the bilayer. The Cytoplasmic portion of the chain corresponds to 64–68 (EAKRT). A helical transmembrane segment spans residues 69–92 (VNAIWFLNLAVADLLSCLALPILF). The Extracellular portion of the chain corresponds to 93–109 (VSIIQEGHWPFGRAACS). C108 and C187 are disulfide-bonded. Residues 110 to 131 (VLPSLILLNMYASILLLATISA) traverse the membrane as a helical segment. The Cytoplasmic portion of the chain corresponds to 132-152 (DRFLLVFNPIWCQNTRGAGLA). Residues 153-173 (WLACCVAWGLALLLTIPSFLY) traverse the membrane as a helical segment. Over 174–200 (RKVLQDDYPPKTTCGVDYGHEGVRAER) the chain is Extracellular. The chain crosses the membrane as a helical span at residues 201–226 (AVAIVRLVVGFLLPLFTLSVCYTFLL). The Cytoplasmic segment spans residues 227–242 (LRTWSRNGTRSTKTLK). The chain crosses the membrane as a helical span at residues 243–265 (VVVAVVVSFFIFWLPYQVMGMIL). At 266–282 (ALLHPSSATFRWAIRLD) the chain is on the extracellular side. A helical membrane pass occupies residues 283 to 303 (PLCIALAYVNCCINPIIYVVA). Residues 304 to 350 (GKGFQGQLRKSLPSLLRNVLAEESVIQGSKSFSRSTVDTVADKCQAV) are Cytoplasmic-facing. S314, S317, S327, S332, S334, and S338 each carry phosphoserine.

Belongs to the G-protein coupled receptor 1 family. In terms of assembly, homodimer. May also form higher-order oligomers. Interacts (when phosphorylated) with ARRB1 and ARRB2; the interaction is associated with internalization of C5aR. In terms of processing, sulfation plays a critical role in the association of C5aR with C5a, but no significant role in the ability of the receptor to transduce a signal and mobilize calcium in response to a small peptide agonist. Post-translationally, phosphorylated on serine residues in response to C5a binding, resulting in internalization of the receptor and short-term desensitization to C5a.

It localises to the cell membrane. Its subcellular location is the cytoplasmic vesicle. Its function is as follows. Receptor for the chemotactic and inflammatory peptide anaphylatoxin C5a. The ligand interacts with at least two sites on the receptor: a high-affinity site on the extracellular N-terminus, and a second site in the transmembrane region which activates downstream signaling events. Receptor activation stimulates chemotaxis, granule enzyme release, intracellular calcium release and superoxide anion production. This is C5a anaphylatoxin chemotactic receptor 1 (C5AR1) from Oryctolagus cuniculus (Rabbit).